The primary structure comprises 722 residues: Pre-B-cell leukemia transcription factor-interacting protein 1 (722 aa).

Polar residues predominate over residues Met1–Ser10. The interval Met1–Ala180 is disordered. Residues Asp88–Gly97 show a composition bias toward basic and acidic residues. Residues Ser133, Ser144, Ser145, and Ser146 each carry the phosphoserine modification. The residue at position 150 (Thr150) is a Phosphothreonine. Ser166 is subject to Phosphoserine. 2 coiled-coil regions span residues Leu266–Asp346 and Asp373–Leu401. A compositionally biased stretch (polar residues) spans Gln442–Ser453. Disordered stretches follow at residues Gln442–Ser562 and Arg691–Gly722. Basic and acidic residues-rich tracts occupy residues His465–Val536 and Ser546–Ser559. The Nuclear localization signal signature appears at Gln482–Trp502. Ser559 is subject to Phosphoserine. The short motif at Asp686–Glu711 is the Nuclear localization signal element.

Interacts with ESR1, PBX1, PBX2 and PBX3. Interacts with TEX11.

The protein localises to the cytoplasm. Its subcellular location is the cytoskeleton. It is found in the nucleus. Regulator of pre-B-cell leukemia transcription factors (BPXs) function. Inhibits the binding of PBX1-HOX complex to DNA and blocks the transcriptional activity of E2A-PBX1. Tethers estrogen receptor-alpha (ESR1) to microtubules and allows them to influence estrogen receptors-alpha signaling. This chain is Pre-B-cell leukemia transcription factor-interacting protein 1 (Pbxip1), found in Rattus norvegicus (Rat).